Here is a 431-residue protein sequence, read N- to C-terminus: Glutamyl-tRNA(Gln) amidotransferase subunit A (431 aa).

Catalysis depends on charge relay system residues lysine 55 and serine 130. Residue serine 154 is the Acyl-ester intermediate of the active site.

It belongs to the amidase family. GatA subfamily. In terms of assembly, heterotrimer of A, B and C subunits.

The catalysed reaction is L-glutamyl-tRNA(Gln) + L-glutamine + ATP + H2O = L-glutaminyl-tRNA(Gln) + L-glutamate + ADP + phosphate + H(+). Its function is as follows. Allows the formation of correctly charged Gln-tRNA(Gln) through the transamidation of misacylated Glu-tRNA(Gln) in organisms which lack glutaminyl-tRNA synthetase. The reaction takes place in the presence of glutamine and ATP through an activated gamma-phospho-Glu-tRNA(Gln). The chain is Glutamyl-tRNA(Gln) amidotransferase subunit A from Methanococcus maripaludis (strain DSM 14266 / JCM 13030 / NBRC 101832 / S2 / LL).